A 397-amino-acid polypeptide reads, in one-letter code: Purine ribonucleoside efflux pump NepI (397 aa).

At 1–21 (MNENIAEKFRADGVARPNWSA) the chain is on the cytoplasmic side. The chain crosses the membrane as a helical span at residues 22–42 (VFAVAFCVACLITVEFLPVSL). Residues 43–54 (LTPMAQDLGISE) are Periplasmic-facing. A helical transmembrane segment spans residues 55–75 (GVAGQSVTVTAFVAMFSSLFI). Over 76–85 (TQIIQATDRR) the chain is Cytoplasmic. Residues 86–106 (YIVILFAVLLTASCLMVSFAN) form a helical membrane-spanning segment. A topological domain (periplasmic) is located at residue Ser-107. A helical membrane pass occupies residues 108–128 (FTLLLLGRACLGLALGGFWAM). The Cytoplasmic segment spans residues 129 to 147 (SASLTMRLVPARTVPKALS). The helical transmembrane segment at 148-168 (VIFGAVSIALVIAAPLGSFLG) threads the bilayer. Over 169-175 (GIIGWRN) the chain is Periplasmic. Residues 176 to 196 (VFNAAAVMGVLCVIWVVKSLP) form a helical membrane-spanning segment. The Cytoplasmic segment spans residues 197 to 215 (SLPGEPSHQKQNMFSLLQR). A helical transmembrane segment spans residues 216-236 (PGVMAGMIAIFMSFAGQFAFF). Residues 237–255 (TYIRPVYMNLAGFDVDGLT) lie on the Periplasmic side of the membrane. The helical transmembrane segment at 256–276 (LVLLSFGIASFVGTSFSSYVL) threads the bilayer. The Cytoplasmic segment spans residues 277-281 (KRSVK). Residues 282-302 (LALAGAPLLLALSALTLIVWG) traverse the membrane as a helical segment. At 303–305 (SDK) the chain is on the periplasmic side. Residues 306-326 (TVAAAIAIIWGLAFALVPVGW) form a helical membrane-spanning segment. Residues 327-343 (STWITRSLADQAEKAGS) are Cytoplasmic-facing. The helical transmembrane segment at 344-364 (IQVAVIQLANTCGAAVGGYAL) threads the bilayer. Over 365–366 (DN) the chain is Periplasmic. Residues 367 to 387 (FGLLSPLALSGGLMLLTALVV) traverse the membrane as a helical segment. At 388-397 (AAKVRITPMS) the chain is on the cytoplasmic side.

This sequence belongs to the major facilitator superfamily. DHA1 family. NepI (TC 2.A.1.2.26) subfamily.

The protein resides in the cell inner membrane. The catalysed reaction is inosine(in) + H(+)(out) = inosine(out) + H(+)(in). It carries out the reaction guanosine(in) + H(+)(out) = guanosine(out) + H(+)(in). In terms of biological role, involved in the efflux of purine ribonucleosides, such as inosine and guanosine. The chain is Purine ribonucleoside efflux pump NepI from Salmonella choleraesuis (strain SC-B67).